The sequence spans 243 residues: Sec-independent protein translocase protein TATB, chloroplastic (243 aa).

Residues 1-67 (MTPTANLLLP…SRTRRRNVIC (67 aa)) constitute a chloroplast transit peptide. Residues 68–69 (AS) lie on the Lumenal side of the membrane. The helical transmembrane segment at 70–90 (LFGVGAPEALVIGVVALLVFG) threads the bilayer. The Stromal portion of the chain corresponds to 91 to 243 (PKGLAEVARN…NKSQKAEGER (153 aa)). 2 disordered regions span residues 129-165 (EIGI…PAPY) and 178-243 (IAAS…EGER). 2 stretches are compositionally biased toward polar residues: residues 135–152 (VSQS…NQQP) and 187–204 (NPQQ…PTTP).

The protein belongs to the TatB family. As to quaternary structure, in thylakoid membranes, TATC and TATB form a large receptor complex, containing about eight TATC-TATB pairs, which binds the precursor protein. Twin arginine signal peptide promotes pH-triggered docking of TATA oligomers to TATC-TATB receptor complex, inducing a conformational switch of TATA that results in activation of the translocase. TATA dissociates from TATC-TATB upon completion of translocation.

The protein resides in the plastid. The protein localises to the chloroplast thylakoid membrane. In terms of biological role, part of the twin-arginine translocation (Tat) system that transports large folded proteins containing a characteristic twin-arginine motif in their signal peptide across the thylakoid membrane. Involved in delta pH-dependent protein transport required for chloroplast development, especially thylakoid membrane formation. TATC and TATB mediate precursor recognition, whereas TATA facilitates translocation. The polypeptide is Sec-independent protein translocase protein TATB, chloroplastic (Zea mays (Maize)).